A 921-amino-acid chain; its full sequence is Probable dipeptidyl-aminopeptidase B (921 aa).

Disordered regions lie at residues 1–33 and 45–66; these read MAGH…TAST and VAAN…RGER. At 1-109 the chain is on the cytoplasmic side; the sequence is MAGHPEENAQ…NKSVDKKLRR (109 aa). Residues 10-22 show a composition bias toward polar residues; sequence QLLSTEQESMSRN. The span at 23-33 shows a compositional bias: low complexity; the sequence is SSDSVASTAST. A helical; Signal-anchor for type II membrane protein transmembrane segment spans residues 110 to 130; it reads LIWIIGGVFIGAWVLALFIFL. At 131–921 the chain is on the vacuolar side; that stretch reads GKQAYKHSSE…VPLEIDAAKV (791 aa). The segment at 138–157 is disordered; the sequence is SSESPHDPQATSSRGSGKKV. N-linked (GlcNAc...) asparagine glycosylation occurs at N362. S768 (charge relay system) is an active-site residue. N-linked (GlcNAc...) asparagine glycosylation occurs at N822. Residues D845 and H878 each act as charge relay system in the active site.

Belongs to the peptidase S9B family.

The protein localises to the vacuole membrane. It catalyses the reaction Release of an N-terminal dipeptide, Xaa-Yaa-|-Zaa-, from a polypeptide, preferentially when Yaa is Pro, provided Zaa is neither Pro nor hydroxyproline.. Type IV dipeptidyl-peptidase which removes N-terminal dipeptides sequentially from polypeptides having unsubstituted N-termini provided that the penultimate residue is proline. The protein is Probable dipeptidyl-aminopeptidase B (dapB) of Botryotinia fuckeliana (strain B05.10) (Noble rot fungus).